Here is a 152-residue protein sequence, read N- to C-terminus: MESTLIILAVLVVAVLGRANTVALAASLLLVLKLLQVDQYIFPFIEKGGTFWGLVLLIAAILVPLARGTVTLRDLGHVFLSWVGLSAFILSLITTYMSGQGLQYLTVQGHSEVMPALILGAVIAAAFLGGVPVGPFITSGVLALLVKLIAKL.

4 helical membrane-spanning segments follow: residues 5 to 25 (LIIL…VALA), 41 to 61 (IFPF…IAAI), 75 to 95 (LGHV…LITT), and 117 to 137 (LILG…GPFI).

This sequence belongs to the UPF0756 family.

The protein localises to the cell membrane. The sequence is that of UPF0756 membrane protein Moth_1009 from Moorella thermoacetica (strain ATCC 39073 / JCM 9320).